A 225-amino-acid polypeptide reads, in one-letter code: Glycerol-3-phosphate acyltransferase (225 aa).

6 helical membrane-spanning segments follow: residues 6 to 26 (FFFF…LIIG), 55 to 75 (WGIV…IICL), 95 to 115 (DIAI…SIFN), 135 to 155 (PFIG…VGYA), 160 to 180 (IMAT…PGIT), and 187 to 207 (ILYF…HSNI).

This sequence belongs to the PlsY family. Probably interacts with PlsX.

The protein localises to the cell membrane. The enzyme catalyses an acyl phosphate + sn-glycerol 3-phosphate = a 1-acyl-sn-glycero-3-phosphate + phosphate. It functions in the pathway lipid metabolism; phospholipid metabolism. In terms of biological role, catalyzes the transfer of an acyl group from acyl-phosphate (acyl-PO(4)) to glycerol-3-phosphate (G3P) to form lysophosphatidic acid (LPA). This enzyme utilizes acyl-phosphate as fatty acyl donor, but not acyl-CoA or acyl-ACP. The chain is Glycerol-3-phosphate acyltransferase from Phytoplasma australiense.